A 330-amino-acid chain; its full sequence is 7,8-didemethyl-8-hydroxy-5-deazariboflavin synthase (330 aa).

In terms of domain architecture, Radical SAM core spans 13-253 (VTFSKNAFIP…EDISIQVPPN (241 aa)). [4Fe-4S] cluster contacts are provided by cysteine 27, cysteine 31, and cysteine 34.

This sequence belongs to the radical SAM superfamily. CofG family. In terms of assembly, consists of two subunits, CofG and CofH. [4Fe-4S] cluster serves as cofactor.

The catalysed reaction is 5-amino-5-(4-hydroxybenzyl)-6-(D-ribitylimino)-5,6-dihydrouracil + S-adenosyl-L-methionine = 7,8-didemethyl-8-hydroxy-5-deazariboflavin + 5'-deoxyadenosine + L-methionine + NH4(+) + H(+). The protein operates within cofactor biosynthesis; coenzyme F0 biosynthesis. In terms of biological role, catalyzes the radical-mediated synthesis of 7,8-didemethyl-8-hydroxy-5-deazariboflavin from 5-amino-5-(4-hydroxybenzyl)-6-(D-ribitylimino)-5,6-dihydrouracil. The sequence is that of 7,8-didemethyl-8-hydroxy-5-deazariboflavin synthase from Methanococcus maripaludis (strain DSM 14266 / JCM 13030 / NBRC 101832 / S2 / LL).